Consider the following 449-residue polypeptide: Biotin carboxylase (449 aa).

The region spanning 1 to 445 (MLDKIVIANR…NIHYLEKKLG (445 aa)) is the Biotin carboxylation domain. ATP contacts are provided by residues lysine 116, lysine 159, 165 to 166 (GG), 201 to 204 (EKYL), histidine 209, and histidine 236. The 198-residue stretch at 120 to 317 (IAAMKKAGVP…LIKEQLRIAA (198 aa)) folds into the ATP-grasp domain. Residue lysine 238 coordinates hydrogencarbonate. Glutamate 276 and glutamate 288 together coordinate ATP. Residues glutamate 276, glutamate 288, and asparagine 290 each coordinate Mg(2+). Positions 276, 288, and 290 each coordinate Mn(2+). 3 residues coordinate hydrogencarbonate: arginine 292, valine 295, and arginine 338. Arginine 292 is an active-site residue. Arginine 338 provides a ligand contact to biotin.

As to quaternary structure, acetyl-CoA carboxylase is a heterohexamer of biotin carboxyl carrier protein, biotin carboxylase and the two subunits of carboxyl transferase in a 2:2 complex. The cofactor is Mg(2+). It depends on Mn(2+) as a cofactor.

The enzyme catalyses N(6)-biotinyl-L-lysyl-[protein] + hydrogencarbonate + ATP = N(6)-carboxybiotinyl-L-lysyl-[protein] + ADP + phosphate + H(+). It functions in the pathway lipid metabolism; malonyl-CoA biosynthesis; malonyl-CoA from acetyl-CoA: step 1/1. Functionally, this protein is a component of the acetyl coenzyme A carboxylase complex; first, biotin carboxylase catalyzes the carboxylation of the carrier protein and then the transcarboxylase transfers the carboxyl group to form malonyl-CoA. This Escherichia coli O157:H7 protein is Biotin carboxylase (accC).